A 69-amino-acid chain; its full sequence is Large ribosomal subunit protein bL31 (69 aa).

Zn(2+) is bound by residues cysteine 17, cysteine 19, cysteine 37, and cysteine 40.

Belongs to the bacterial ribosomal protein bL31 family. Type A subfamily. In terms of assembly, part of the 50S ribosomal subunit. Zn(2+) serves as cofactor.

Binds the 23S rRNA. The chain is Large ribosomal subunit protein bL31 from Clostridium botulinum (strain Eklund 17B / Type B).